A 332-amino-acid polypeptide reads, in one-letter code: Glycerol-3-phosphate dehydrogenase [NAD(P)+] (332 aa).

Residues Trp-11, Arg-30, and Lys-108 each contribute to the NADPH site. The sn-glycerol 3-phosphate site is built by Lys-108, Gly-137, and Ser-139. Ala-141 lines the NADPH pocket. Residues Lys-192, Asp-245, Ser-255, Arg-256, and Asn-257 each coordinate sn-glycerol 3-phosphate. The active-site Proton acceptor is Lys-192. NADPH is bound at residue Arg-256. NADPH-binding residues include Val-280 and Glu-282.

It belongs to the NAD-dependent glycerol-3-phosphate dehydrogenase family.

The protein resides in the cytoplasm. It catalyses the reaction sn-glycerol 3-phosphate + NAD(+) = dihydroxyacetone phosphate + NADH + H(+). The catalysed reaction is sn-glycerol 3-phosphate + NADP(+) = dihydroxyacetone phosphate + NADPH + H(+). It functions in the pathway membrane lipid metabolism; glycerophospholipid metabolism. Its function is as follows. Catalyzes the reduction of the glycolytic intermediate dihydroxyacetone phosphate (DHAP) to sn-glycerol 3-phosphate (G3P), the key precursor for phospholipid synthesis. The protein is Glycerol-3-phosphate dehydrogenase [NAD(P)+] of Burkholderia orbicola (strain AU 1054).